Reading from the N-terminus, the 418-residue chain is Glutamyl-tRNA reductase (418 aa).

Substrate is bound by residues 49 to 52, serine 109, 114 to 116, and glutamine 120; these read TCNR and EPQ. Cysteine 50 functions as the Nucleophile in the catalytic mechanism. 189-194 is an NADP(+) binding site; that stretch reads GAGETI.

It belongs to the glutamyl-tRNA reductase family. As to quaternary structure, homodimer.

It carries out the reaction (S)-4-amino-5-oxopentanoate + tRNA(Glu) + NADP(+) = L-glutamyl-tRNA(Glu) + NADPH + H(+). The protein operates within porphyrin-containing compound metabolism; protoporphyrin-IX biosynthesis; 5-aminolevulinate from L-glutamyl-tRNA(Glu): step 1/2. Catalyzes the NADPH-dependent reduction of glutamyl-tRNA(Glu) to glutamate 1-semialdehyde (GSA). The polypeptide is Glutamyl-tRNA reductase (Klebsiella pneumoniae subsp. pneumoniae (strain ATCC 700721 / MGH 78578)).